The chain runs to 382 residues: Prolargin (382 aa).

An N-terminal signal peptide occupies residues 1–20; sequence MRSPLCWLLPLLILASVAQG. Residues 19 to 66 form a disordered region; it reads QGQPTRRPRPGTGPGRRPRPRPRPTPSFPQPDEPAEPTDLPPPLPPGP. 2 stretches are compositionally biased toward pro residues: residues 41–50 and 57–66; these read RPTPSFPQPD and DLPPPLPPGP. LRR repeat units follow at residues 95–114, 115–138, 139–162, 163–183, 184–207, 208–233, 234–254, 255–278, 279–303, 304–323, 324–362, and 363–382; these read RKVP…NNFI, TELP…NNRI, RKID…KNQL, EEVP…QNHI, SRIP…HNRL, SDGV…HNIL, RKMP…SNKI, ETIP…YNKL, TDRG…HNRI, SSVP…NNSI, EKIN…GNYL, and KPPI…SVVI. A glycan (N-linked (GlcNAc...) asparagine) is linked at Asn124. Residues Asn289, Asn320, and Asn327 are each glycosylated (N-linked (GlcNAc...) asparagine). Cys332 and Cys373 are joined by a disulfide.

This sequence belongs to the small leucine-rich proteoglycan (SLRP) family. SLRP class II subfamily. In terms of assembly, binds the basement membrane heparan sulfate proteoglycan perlecan and triple helical collagens type I and type II. Glycosylated; contains heparan sulfate. As to expression, connective tissue.

Its subcellular location is the secreted. It is found in the extracellular space. The protein resides in the extracellular matrix. May anchor basement membranes to the underlying connective tissue. In Homo sapiens (Human), this protein is Prolargin (PRELP).